Here is a 222-residue protein sequence, read N- to C-terminus: Uclacyanin-3 (222 aa).

A signal peptide spans 1–21 (MGSTVAAALLLFLAAVPAVFA). Positions 22–120 (ATFKVGDISG…GMKLAVPVLA (99 aa)) constitute a Phytocyanin domain. Cu cation is bound by residues His61, Cys102, His107, and Met112. Cysteines 74 and 108 form a disulfide. The interval 121–198 (AAPSPSTPSS…APLPPSLSPN (78 aa)) is disordered. 2 stretches are compositionally biased toward pro residues: residues 125 to 172 (PSTP…PSAS) and 185 to 195 (TPPPAPLPPSL). The GPI-anchor amidated asparagine moiety is linked to residue Asn198. Positions 199–222 (AASKGVMSYGIIGVTMILMYAVMT) are cleaved as a propeptide — removed in mature form.

It is found in the cell membrane. Functionally, probably acts as an electron carrier involved in oxygen activation and/or lignin formation. The chain is Uclacyanin-3 (UCC3) from Arabidopsis thaliana (Mouse-ear cress).